The chain runs to 204 residues: Large ribosomal subunit protein eL15 (204 aa).

Residues 155 to 204 are disordered; the sequence is VHKHREQRGLTSAGRKSRGLGKGWRFSATRGGSQAKNWKRKNTKVFHRKR. The span at 191–204 shows a compositional bias: basic residues; the sequence is NWKRKNTKVFHRKR.

Belongs to the eukaryotic ribosomal protein eL15 family.

The chain is Large ribosomal subunit protein eL15 (rpl-15) from Caenorhabditis elegans.